A 355-amino-acid polypeptide reads, in one-letter code: UDP-N-acetylglucosamine--N-acetylmuramyl-(pentapeptide) pyrophosphoryl-undecaprenol N-acetylglucosamine transferase (355 aa).

Residues 15–17 (TGG), Asn127, Arg163, Ser191, Ile244, 263–268 (ALTVSE), and Gln288 each bind UDP-N-acetyl-alpha-D-glucosamine.

This sequence belongs to the glycosyltransferase 28 family. MurG subfamily.

The protein localises to the cell inner membrane. It carries out the reaction di-trans,octa-cis-undecaprenyl diphospho-N-acetyl-alpha-D-muramoyl-L-alanyl-D-glutamyl-meso-2,6-diaminopimeloyl-D-alanyl-D-alanine + UDP-N-acetyl-alpha-D-glucosamine = di-trans,octa-cis-undecaprenyl diphospho-[N-acetyl-alpha-D-glucosaminyl-(1-&gt;4)]-N-acetyl-alpha-D-muramoyl-L-alanyl-D-glutamyl-meso-2,6-diaminopimeloyl-D-alanyl-D-alanine + UDP + H(+). It functions in the pathway cell wall biogenesis; peptidoglycan biosynthesis. Functionally, cell wall formation. Catalyzes the transfer of a GlcNAc subunit on undecaprenyl-pyrophosphoryl-MurNAc-pentapeptide (lipid intermediate I) to form undecaprenyl-pyrophosphoryl-MurNAc-(pentapeptide)GlcNAc (lipid intermediate II). This is UDP-N-acetylglucosamine--N-acetylmuramyl-(pentapeptide) pyrophosphoryl-undecaprenol N-acetylglucosamine transferase from Shigella boydii serotype 18 (strain CDC 3083-94 / BS512).